Here is a 334-residue protein sequence, read N- to C-terminus: Protein-methionine-sulfoxide reductase catalytic subunit MsrP (334 aa).

A signal peptide (tat-type signal) is located at residues 1 to 44; it reads MKKIRPLTEADVTAESAFFMQRRQVLKALGISAAALSLPSTAQA. Mo-molybdopterin is bound by residues asparagine 88, 91 to 92, cysteine 146, threonine 181, asparagine 233, arginine 238, and 249 to 251; these read YE and GIK.

The protein belongs to the MsrP family. In terms of assembly, heterodimer of a catalytic subunit (MsrP) and a heme-binding subunit (MsrQ). Requires Mo-molybdopterin as cofactor. Predicted to be exported by the Tat system. The position of the signal peptide cleavage has not been experimentally proven.

Its subcellular location is the periplasm. The catalysed reaction is L-methionyl-[protein] + a quinone + H2O = L-methionyl-(S)-S-oxide-[protein] + a quinol. It catalyses the reaction L-methionyl-[protein] + a quinone + H2O = L-methionyl-(R)-S-oxide-[protein] + a quinol. Part of the MsrPQ system that repairs oxidized periplasmic proteins containing methionine sulfoxide residues (Met-O), using respiratory chain electrons. Thus protects these proteins from oxidative-stress damage caused by reactive species of oxygen and chlorine generated by the host defense mechanisms. MsrPQ is essential for the maintenance of envelope integrity under bleach stress, rescuing a wide series of structurally unrelated periplasmic proteins from methionine oxidation, including the primary periplasmic chaperone SurA and the lipoprotein Pal. The catalytic subunit MsrP is non-stereospecific, being able to reduce both (R-) and (S-) diastereoisomers of methionine sulfoxide. The protein is Protein-methionine-sulfoxide reductase catalytic subunit MsrP of Salmonella newport (strain SL254).